The following is a 618-amino-acid chain: Probable peptide transporter ptr2 (618 aa).

Position 22 is a phosphoserine (serine 22). Tyrosine 23 is modified (phosphotyrosine). 2 positions are modified to phosphoserine: serine 25 and serine 33. The interval 26-50 (KEKKADGSATINTADEQSSTDELQK) is disordered. Polar residues predominate over residues 34 to 50 (ATINTADEQSSTDELQK). Position 35 is a phosphothreonine (threonine 35). The residue at position 44 (serine 44) is a Phosphoserine. Phosphothreonine is present on threonine 45. 2 positions are modified to phosphoserine: serine 51 and serine 53. At threonine 54 the chain carries Phosphothreonine. 10 helical membrane-spanning segments follow: residues 131-151 (GLSN…ALIA), 161-181 (IVCS…TAIP), 187-207 (GKSM…TGGI), 247-267 (YMIF…TTSL), 273-293 (FVYA…ILAV), 400-420 (FDSI…YPLL), 430-450 (ILRI…AAVL), 475-495 (VWIQ…ASIT), 510-530 (SIIT…SICI), and 541-561 (WMYT…WVCF). A Phosphoserine modification is found at serine 594. Threonine 618 carries the phosphothreonine modification.

This sequence belongs to the major facilitator superfamily. Proton-dependent oligopeptide transporter (POT/PTR) (TC 2.A.17) family.

It localises to the membrane. In terms of biological role, uptake of small peptides. In Schizosaccharomyces pombe (strain 972 / ATCC 24843) (Fission yeast), this protein is Probable peptide transporter ptr2 (ptr2).